A 413-amino-acid polypeptide reads, in one-letter code: Gamma-glutamyl phosphate reductase (413 aa).

The protein belongs to the gamma-glutamyl phosphate reductase family.

The protein localises to the cytoplasm. The enzyme catalyses L-glutamate 5-semialdehyde + phosphate + NADP(+) = L-glutamyl 5-phosphate + NADPH + H(+). It functions in the pathway amino-acid biosynthesis; L-proline biosynthesis; L-glutamate 5-semialdehyde from L-glutamate: step 2/2. Catalyzes the NADPH-dependent reduction of L-glutamate 5-phosphate into L-glutamate 5-semialdehyde and phosphate. The product spontaneously undergoes cyclization to form 1-pyrroline-5-carboxylate. The chain is Gamma-glutamyl phosphate reductase from Lactococcus lactis subsp. cremoris (strain SK11).